Here is a 217-residue protein sequence, read N- to C-terminus: Phosphate-specific transport system accessory protein PhoU homolog 2 (217 aa).

Belongs to the PhoU family. In terms of assembly, homodimer.

The protein resides in the cytoplasm. In terms of biological role, plays a role in the regulation of phosphate uptake. This chain is Phosphate-specific transport system accessory protein PhoU homolog 2, found in Methanothermobacter thermautotrophicus (strain ATCC 29096 / DSM 1053 / JCM 10044 / NBRC 100330 / Delta H) (Methanobacterium thermoautotrophicum).